The primary structure comprises 387 residues: MEQVVIVDAIRTPMGRSKGGAFRNVRAEDLSAHLMRSLLARNPALEAAALDDIYWGCVQQTLEQGFNIARNAALLAEVPHSVPAVTVNRLCGSSMQALHDAARMIMTGDAQACLVGGVEHMGHVPMSHGVDFHPGLSRNVAKAAGMMGLTAEMLARMHGISREMQDAFAARSHARAWAATQSGAFKNEIIPTGGHDADGVLKQFNYDEVIRPETTVEALATLRPAFDPVSGTVTAGTSSALSDGAAAMLVMSESRARELGLKPRARVRSMAVVGCDPSIMGYGPVPASKLALKKAGLSASDIGVFEMNEAFAAQILPCIKDLGLMEQIDEKINLNGGAIALGHPLGCSGARISTTLLNLMEHKDVQFGLATMCIGLGQGIATVFERV.

The active-site Acyl-thioester intermediate is the Cys-91. Residues His-343 and Cys-373 each act as proton acceptor in the active site.

The protein belongs to the thiolase-like superfamily. Thiolase family. Heterotetramer of two alpha chains (FadB) and two beta chains (FadA).

It is found in the cytoplasm. It catalyses the reaction an acyl-CoA + acetyl-CoA = a 3-oxoacyl-CoA + CoA. It participates in lipid metabolism; fatty acid beta-oxidation. Its function is as follows. Catalyzes the final step of fatty acid oxidation in which acetyl-CoA is released and the CoA ester of a fatty acid two carbons shorter is formed. This chain is 3-ketoacyl-CoA thiolase, found in Escherichia coli O1:K1 / APEC.